Consider the following 393-residue polypeptide: Cyclin CCL1 (393 aa).

Over residues 1 to 19 (MTDIQLNGKSTLDTPSATM) the composition is skewed to polar residues. 2 disordered regions span residues 1–45 (MTDI…RISD) and 289–325 (SREG…SEEY). Composition is skewed to basic and acidic residues over residues 21-35 (AKEK…DENN) and 300-321 (NEKE…KSTE).

The protein belongs to the cyclin family. Cyclin C subfamily. CCL1 and KIN28 form the TFIIK complex, a component of TFIIH holo complex. Component of a complex consisting of KIN28, CCL1 and TFB3.

Its function is as follows. Regulatory component of the TFIIK complex (KIN28-CCL1 dimer) which is the protein kinase component of transcription factor IIH (TFIIH) and phosphorylates the C-terminal domain of RNA polymerase II during transition from transcription to elongation after preinitiation complex (PIC) formation, thereby positively regulating transcription. TFIIH (or factor B) is essential for both basal and activated transcription, and is involved in nucleotide excision repair (NER) of damaged DNA. TFIIH has DNA-dependent ATPase activity and is essential for polymerase II transcription in vitro. The protein is Cyclin CCL1 (CCL1) of Saccharomyces cerevisiae (strain ATCC 204508 / S288c) (Baker's yeast).